The chain runs to 107 residues: V-type proton ATPase subunit G (107 aa).

This sequence belongs to the V-ATPase G subunit family. As to quaternary structure, V-ATPase is a heteromultimeric enzyme composed of a peripheral catalytic V1 complex (components A to H) attached to an integral membrane V0 proton pore complex (components: a, c, c', c'' and d).

In terms of biological role, catalytic subunit of the peripheral V1 complex of vacuolar ATPase (V-ATPase). V-ATPase is responsible for acidifying a variety of intracellular compartments in eukaryotic cells. The chain is V-type proton ATPase subunit G (atp6v1g) from Dictyostelium discoideum (Social amoeba).